Here is a 128-residue protein sequence, read N- to C-terminus: Small ribosomal subunit protein uS10 (128 aa).

Belongs to the universal ribosomal protein uS10 family.

This chain is Small ribosomal subunit protein uS10 (RPS20), found in Oryza sativa subsp. japonica (Rice).